Consider the following 396-residue polypeptide: Phosphopentomutase (396 aa).

Asp13, Asp288, His293, Asp329, His330, and His341 together coordinate Mn(2+).

This sequence belongs to the phosphopentomutase family. Mn(2+) serves as cofactor.

It is found in the cytoplasm. The enzyme catalyses 2-deoxy-alpha-D-ribose 1-phosphate = 2-deoxy-D-ribose 5-phosphate. It carries out the reaction alpha-D-ribose 1-phosphate = D-ribose 5-phosphate. It functions in the pathway carbohydrate degradation; 2-deoxy-D-ribose 1-phosphate degradation; D-glyceraldehyde 3-phosphate and acetaldehyde from 2-deoxy-alpha-D-ribose 1-phosphate: step 1/2. Its function is as follows. Isomerase that catalyzes the conversion of deoxy-ribose 1-phosphate (dRib-1-P) and ribose 1-phosphate (Rib-1-P) to deoxy-ribose 5-phosphate (dRib-5-P) and ribose 5-phosphate (Rib-5-P), respectively. The polypeptide is Phosphopentomutase (Clostridium perfringens (strain ATCC 13124 / DSM 756 / JCM 1290 / NCIMB 6125 / NCTC 8237 / Type A)).